The following is an 811-amino-acid chain: Lon protease 1 (811 aa).

The region spanning leucine 15–isoleucine 212 is the Lon N-terminal domain. Position 376 to 383 (glycine 376 to threonine 383) interacts with ATP. The Lon proteolytic domain occupies tyrosine 613–leucine 794. Catalysis depends on residues serine 700 and lysine 743.

The protein belongs to the peptidase S16 family. In terms of assembly, homohexamer. Organized in a ring with a central cavity.

It is found in the cytoplasm. The catalysed reaction is Hydrolysis of proteins in presence of ATP.. In terms of biological role, ATP-dependent serine protease that mediates the selective degradation of mutant and abnormal proteins as well as certain short-lived regulatory proteins. Required for cellular homeostasis and for survival from DNA damage and developmental changes induced by stress. Degrades polypeptides processively to yield small peptide fragments that are 5 to 10 amino acids long. Binds to DNA in a double-stranded, site-specific manner. The chain is Lon protease 1 from Sorangium cellulosum (strain So ce56) (Polyangium cellulosum (strain So ce56)).